The following is a 157-amino-acid chain: Putative pre-16S rRNA nuclease (157 aa).

This sequence belongs to the YqgF nuclease family.

The protein localises to the cytoplasm. In terms of biological role, could be a nuclease involved in processing of the 5'-end of pre-16S rRNA. This Orientia tsutsugamushi (strain Ikeda) (Rickettsia tsutsugamushi) protein is Putative pre-16S rRNA nuclease.